Here is a 322-residue protein sequence, read N- to C-terminus: tRNA-dihydrouridine synthase B (322 aa).

FMN-binding positions include proline 16–alanine 18 and glutamine 70. Cysteine 100 (proton donor) is an active-site residue. Residues lysine 139, asparagine 200–aspartate 202, and glycine 224–arginine 225 contribute to the FMN site.

The protein belongs to the Dus family. DusB subfamily. Requires FMN as cofactor.

It catalyses the reaction a 5,6-dihydrouridine in tRNA + NAD(+) = a uridine in tRNA + NADH + H(+). It carries out the reaction a 5,6-dihydrouridine in tRNA + NADP(+) = a uridine in tRNA + NADPH + H(+). Its function is as follows. Catalyzes the synthesis of 5,6-dihydrouridine (D), a modified base found in the D-loop of most tRNAs, via the reduction of the C5-C6 double bond in target uridines. The protein is tRNA-dihydrouridine synthase B of Shewanella oneidensis (strain ATCC 700550 / JCM 31522 / CIP 106686 / LMG 19005 / NCIMB 14063 / MR-1).